The sequence spans 1067 residues: Receptor-type guanylate cyclase gcy-10 (1067 aa).

Positions 1 to 20 are cleaved as a signal peptide; that stretch reads MLKSLLIIVIVFLHRELCDG. At 21-438 the chain is on the extracellular side; it reads IQLILFDNWP…CVAKSSCVNY (418 aa). Asn411 carries an N-linked (GlcNAc...) asparagine glycan. Residues 439–459 form a helical membrane-spanning segment; it reads IPHIIAAVVIVTIIVIAIVII. Topologically, residues 460–1067 are cytoplasmic; the sequence is VKQRRHKLNI…RGSIVPLQKA (608 aa). The 283-residue stretch at 509-791 folds into the Protein kinase domain; it reads ALTSRRRVFG…ESISTVYPLS (283 aa). Residues 515-523 and Lys534 contribute to the ATP site; that span reads RVFGSYALV. A Guanylate cyclase domain is found at 859–989; the sequence is TVMFVQICDF…DTVNFASRMQ (131 aa).

The protein belongs to the adenylyl cyclase class-4/guanylyl cyclase family. Expressed predominantly in AWC but also in AWB, ASI, ASJ and ASK sensory neurons and in I1 interneuron.

It localises to the cell membrane. The protein localises to the cell projection. Its subcellular location is the cilium. The catalysed reaction is GTP = 3',5'-cyclic GMP + diphosphate. Guanylate cyclase involved in the production of the second messenger cGMP. Regulates chemotaxis responses toward volatile odorants in AWC sensory neurons and their avoidance in AWB sensory neurons. May be involved in sensitivity to quinine by regulating egl-4 activity through the production of cGMP. Involved in phototransduction in ASJ neurons downstream of G protein coupled-photoreceptor lite-1. Required to maintain the expression of putative olfactory receptor str-2 in AWC neurons in adults. In AWB and AWC sensory neurons, mediates the recognition of food oders which subsequently allows for the detection of preferred food sources. Involved in AWB sensory neuron development and extension during postembryonic development, potentially via mediating localization of tub-1 and PI(4,5)P2 to membrane cilia. The polypeptide is Receptor-type guanylate cyclase gcy-10 (Caenorhabditis elegans).